The chain runs to 416 residues: Kynureninase (416 aa).

Pyridoxal 5'-phosphate contacts are provided by residues threonine 97, serine 98, 129-132 (FPTD), threonine 172, aspartate 201, histidine 204, and tyrosine 226. Position 227 is an N6-(pyridoxal phosphate)lysine (lysine 227). The pyridoxal 5'-phosphate site is built by tryptophan 256 and threonine 282.

It belongs to the kynureninase family. As to quaternary structure, homodimer. The cofactor is pyridoxal 5'-phosphate.

It carries out the reaction L-kynurenine + H2O = anthranilate + L-alanine + H(+). The enzyme catalyses 3-hydroxy-L-kynurenine + H2O = 3-hydroxyanthranilate + L-alanine + H(+). It participates in amino-acid degradation; L-kynurenine degradation; L-alanine and anthranilate from L-kynurenine: step 1/1. The protein operates within cofactor biosynthesis; NAD(+) biosynthesis; quinolinate from L-kynurenine: step 2/3. Catalyzes the cleavage of L-kynurenine (L-Kyn) and L-3-hydroxykynurenine (L-3OHKyn) into anthranilic acid (AA) and 3-hydroxyanthranilic acid (3-OHAA), respectively. In Pseudomonas fluorescens, this protein is Kynureninase.